The following is a 226-amino-acid chain: Octanoyltransferase (226 aa).

The BPL/LPL catalytic domain maps to 34–212 (LAAPDVLLTL…AFSRVFGLEF (179 aa)). Substrate-binding positions include 76 to 83 (RGGDVTYH), 143 to 145 (AIG), and 156 to 158 (GIA). Cysteine 174 (acyl-thioester intermediate) is an active-site residue.

It belongs to the LipB family.

Its subcellular location is the cytoplasm. The enzyme catalyses octanoyl-[ACP] + L-lysyl-[protein] = N(6)-octanoyl-L-lysyl-[protein] + holo-[ACP] + H(+). It functions in the pathway protein modification; protein lipoylation via endogenous pathway; protein N(6)-(lipoyl)lysine from octanoyl-[acyl-carrier-protein]: step 1/2. Its function is as follows. Catalyzes the transfer of endogenously produced octanoic acid from octanoyl-acyl-carrier-protein onto the lipoyl domains of lipoate-dependent enzymes. Lipoyl-ACP can also act as a substrate although octanoyl-ACP is likely to be the physiological substrate. This Thermosynechococcus vestitus (strain NIES-2133 / IAM M-273 / BP-1) protein is Octanoyltransferase.